The following is a 612-amino-acid chain: 2-isopropylmalate synthase B (612 aa).

The region spanning 71–344 (VRIFDTTLRD…YTGINTQHIL (274 aa)) is the Pyruvate carboxyltransferase domain. Asp-80, His-277, and Asn-313 together coordinate a divalent metal cation.

This sequence belongs to the alpha-IPM synthase/homocitrate synthase family. LeuA type 1 subfamily. Homodimer. Requires a divalent metal cation as cofactor.

The catalysed reaction is 3-methyl-2-oxobutanoate + acetyl-CoA + H2O = (2S)-2-isopropylmalate + CoA + H(+). It participates in amino-acid biosynthesis; L-leucine biosynthesis; L-leucine from 3-methyl-2-oxobutanoate: step 1/4. Catalyzes the condensation of the acetyl group of acetyl-CoA with 3-methyl-2-oxobutanoate (2-oxoisovalerate) to form 3-carboxy-3-hydroxy-4-methylpentanoate (2-isopropylmalate). This is 2-isopropylmalate synthase B (IPMSB) from Solanum pennellii (Tomato).